Here is a 424-residue protein sequence, read N- to C-terminus: Probable methyltransferase EP424R (424 aa).

One can recognise an Adrift-type SAM-dependent 2'-O-MTase domain in the interval 103–315; the sequence is QIVTNAWLKM…TYIVGKNRLR (213 aa). S-adenosyl-L-methionine-binding residues include G135 and D228. K268 acts as the Proton acceptor in catalysis.

It is found in the virion. The chain is Probable methyltransferase EP424R from Ornithodoros (relapsing fever ticks).